The primary structure comprises 136 residues: ATP synthase epsilon chain (136 aa).

Belongs to the ATPase epsilon chain family. In terms of assembly, F-type ATPases have 2 components, CF(1) - the catalytic core - and CF(0) - the membrane proton channel. CF(1) has five subunits: alpha(3), beta(3), gamma(1), delta(1), epsilon(1). CF(0) has three main subunits: a, b and c.

The protein resides in the cell membrane. Functionally, produces ATP from ADP in the presence of a proton gradient across the membrane. The polypeptide is ATP synthase epsilon chain (Exiguobacterium sp. (strain ATCC BAA-1283 / AT1b)).